We begin with the raw amino-acid sequence, 504 residues long: Probable ergothioneine transporter EgtUBC (504 aa).

Residues 19-198 form the ABC transmembrane type-1 domain; it reads LVQHIQISFV…LLAILFDFLL (180 aa). Helical transmembrane passes span 25–44, 57–74, 81–97, 146–170, 179–198, and 210–229; these read ISFV…GIYL, VAAI…GLLI, IVPA…LPIL, MVLI…LILL, LILL…DFLL, and IITI…VPYF. Residues 231–504 form an ergothioneine binding domain region; it reads SDKKEITIAG…DYLKDQGIIK (274 aa).

The protein in the N-terminal section; belongs to the binding-protein-dependent transport system permease family. In the C-terminal section; belongs to the OsmX family. In terms of assembly, the complex is probably composed of at least an ATP-binding protein (EgtUA) and a transmembrane protein (EgtUBC).

It localises to the membrane. In terms of biological role, part of an ABC transporter complex EgtU required for the uptake of ergothioneine (EGT), a natural low-molecular weight (LMW) thiol antioxidant. Responsible for the translocation of the substrate across the membrane. Also contains a C-terminal periplasmic solute-binding domain (SBD) which binds to EGT with sub-micromolar affinity. Does not bind glycine betaine, carnitine, choline, proline, or cholate. Plays a role in bile acid tolerance. Dispensable for choline uptake. Probably not involved in betaine, carnitine or choline mediated osmo- or chill tolerance. Plays a role in enhancing virulence in mice. This Listeria monocytogenes serovar 1/2a (strain ATCC BAA-679 / EGD-e) protein is Probable ergothioneine transporter EgtUBC.